The following is a 543-amino-acid chain: Chaperonin GroEL 2 (543 aa).

ATP-binding positions include 29–32 (TLGP), 86–90 (DGTTT), Gly413, and Asp495. The interval 524 to 543 (KPEPKENAPTGAGMGGDFDY) is disordered.

Belongs to the chaperonin (HSP60) family. In terms of assembly, forms a cylinder of 14 subunits composed of two heptameric rings stacked back-to-back. Interacts with the co-chaperonin GroES.

The protein localises to the cytoplasm. The enzyme catalyses ATP + H2O + a folded polypeptide = ADP + phosphate + an unfolded polypeptide.. Together with its co-chaperonin GroES, plays an essential role in assisting protein folding. The GroEL-GroES system forms a nano-cage that allows encapsulation of the non-native substrate proteins and provides a physical environment optimized to promote and accelerate protein folding. The sequence is that of Chaperonin GroEL 2 from Acaryochloris marina (strain MBIC 11017).